Consider the following 146-residue polypeptide: UPF0742 protein C1348.03 (146 aa).

A helical membrane pass occupies residues 38 to 60; sequence LTVKYCLAVKLLIYLLYCWYIYS.

It belongs to the UPF0742 family.

Its subcellular location is the cytoplasm. It localises to the nucleus membrane. This Schizosaccharomyces pombe (strain 972 / ATCC 24843) (Fission yeast) protein is UPF0742 protein C1348.03.